The primary structure comprises 294 residues: Nucleotide-binding protein LCA_0526 (294 aa).

Residue 12-19 (GMSGAGKT) coordinates ATP. Residue 62–65 (DLRS) coordinates GTP.

The protein belongs to the RapZ-like family.

In terms of biological role, displays ATPase and GTPase activities. In Latilactobacillus sakei subsp. sakei (strain 23K) (Lactobacillus sakei subsp. sakei), this protein is Nucleotide-binding protein LCA_0526.